We begin with the raw amino-acid sequence, 140 residues long: Large ribosomal subunit protein uL24 (140 aa).

This sequence belongs to the universal ribosomal protein uL24 family. As to quaternary structure, part of the 50S ribosomal subunit.

In terms of biological role, one of two assembly initiator proteins, it binds directly to the 5'-end of the 23S rRNA, where it nucleates assembly of the 50S subunit. Functionally, located at the polypeptide exit tunnel on the outside of the subunit. This Nanoarchaeum equitans (strain Kin4-M) protein is Large ribosomal subunit protein uL24.